The primary structure comprises 268 residues: Small ribosomal subunit protein uS2 (268 aa).

Residues 228–268 (QLDSEQDYEDFDESISDEYDDYEDEEEYEEQDLEVDASEDE) form a disordered region. The span at 231-268 (SEQDYEDFDESISDEYDDYEDEEEYEEQDLEVDASEDE) shows a compositional bias: acidic residues.

The protein belongs to the universal ribosomal protein uS2 family.

In Rippkaea orientalis (strain PCC 8801 / RF-1) (Cyanothece sp. (strain PCC 8801)), this protein is Small ribosomal subunit protein uS2.